A 302-amino-acid chain; its full sequence is Heme A synthase (302 aa).

Residues Met1–Lys8 lie on the Cytoplasmic side of the membrane. The chain crosses the membrane as a helical span at residues Trp9–Thr29. The Extracellular portion of the chain corresponds to Lys30–Ser67. Cys37 and Cys44 are oxidised to a cystine. The active site involves Glu60. His63 lines the heme o pocket. Residues Ala68 to Ile88 form a helical membrane-spanning segment. The Cytoplasmic portion of the chain corresponds to Lys89–Pro93. A helical transmembrane segment spans residues Leu94–Ile114. Topologically, residues Trp115–His125 are extracellular. His125 is a binding site for heme o. Residues Phe126–Ile146 traverse the membrane as a helical segment. The Cytoplasmic segment spans residues Asp147–Leu161. The helical transmembrane segment at Arg162–Val182 threads the bilayer. Residues Arg183–Arg215 lie on the Extracellular side of the membrane. His214 lines the heme b pocket. The helical transmembrane segment at Gly216–Tyr236 threads the bilayer. The Cytoplasmic segment spans residues Ser237–Tyr244. The helical transmembrane segment at Gly245–Ile265 threads the bilayer. Topologically, residues Thr266–Leu270 are extracellular. The helical transmembrane segment at Ile271–Ile291 threads the bilayer. Position 276 (His276) interacts with heme b. The Cytoplasmic portion of the chain corresponds to Leu292–Lys302.

It belongs to the COX15/CtaA family. Type 1 subfamily. As to quaternary structure, interacts with CtaB. The cofactor is heme b.

Its subcellular location is the cell membrane. The catalysed reaction is Fe(II)-heme o + 2 A + H2O = Fe(II)-heme a + 2 AH2. It participates in porphyrin-containing compound metabolism; heme A biosynthesis; heme A from heme O: step 1/1. Its function is as follows. Catalyzes the conversion of heme O to heme A by two successive hydroxylations of the methyl group at C8. The first hydroxylation forms heme I, the second hydroxylation results in an unstable dihydroxymethyl group, which spontaneously dehydrates, resulting in the formyl group of heme A. In Staphylococcus epidermidis (strain ATCC 35984 / DSM 28319 / BCRC 17069 / CCUG 31568 / BM 3577 / RP62A), this protein is Heme A synthase.